The sequence spans 1195 residues: Voltage-gated inwardly rectifying potassium channel KCNH7 (1195 aa).

The Cytoplasmic portion of the chain corresponds to 1–412 (MPVRRGHVAP…YSPFKAVWDW (412 aa)). The 30-residue stretch at 41–70 (IIYCNDGFCEMTGFSRPDVMQKPCTCDFLH) folds into the PAS domain. A PAC domain is found at 92–144 (RKVEVTYYHKNGSTFICNTHIIPVKNQEGVAMMFIINFEYVTDEENAATPERV). Residue serine 174 is modified to Phosphoserine. The tract at residues 194–216 (SVAMKHFKSPTKESCSPSEADDT) is disordered. 2 positions are modified to phosphoserine: serine 238 and serine 319. Residues 413 to 433 (LILLLVIYTAIFTPYSAAFLL) form a helical membrane-spanning segment. Residues 434–449 (NDREEQKRRECGYSCS) are Extracellular-facing. The chain crosses the membrane as a helical span at residues 450 to 470 (PLNVVDLIVDIMFIIDILINF). The Cytoplasmic segment spans residues 471 to 494 (RTTYVNQNEEVVSDPAKIAIHYFK). The helical transmembrane segment at 495–515 (GWFLIDMVAAIPFDLLIFGSG) threads the bilayer. The Extracellular segment spans residues 516 to 521 (SDETTT). Residues 522–542 (LIGLLKTARLLRLVRVARKLD) form a helical; Voltage-sensor membrane-spanning segment. Residues 543 to 549 (RYSEYGA) are Cytoplasmic-facing. The chain crosses the membrane as a helical span at residues 550–570 (AVLMLLMCIFALIAHWLACIW). The Extracellular segment spans residues 571 to 614 (YAIGNVERPYLTDKIGWLDSLGTQIGKRYNDSDSSSGPSIKDKY). N-linked (GlcNAc...) asparagine glycosylation is present at asparagine 600. Positions 615-635 (VTALYFTFSSLTSVGFGNVSP) form an intramembrane region, pore-forming. The short motif at 627–632 (SVGFGN) is the Selectivity filter element. Residues 636-641 (NTNSEK) are Extracellular-facing. A helical membrane pass occupies residues 642–662 (IFSICVMLIGSLMYASIFGNV). At 663 to 1195 (SAIIQRLYSG…HVSDPGLPGK (533 aa)) the chain is on the cytoplasmic side. The tract at residues 745 to 845 (AFRGASKGCL…IQREDLLEVL (101 aa)) is cNMP-binding domain. Residues 870 to 915 (AKSQSVNDSEGDTGKLRRRRLSFESEGEKDFSKENSANDADDSTDT) are disordered. Basic and acidic residues predominate over residues 890 to 902 (LSFESEGEKDFSK). 2 positions are modified to phosphoserine: serine 891 and serine 894. Residues 1027–1054 (YGEVEQRLDLLQEQLNRLESQMTTDIQA) are a coiled coil.

Belongs to the potassium channel family. H (Eag) (TC 1.A.1.20) subfamily. Kv11.3/KCNH7 sub-subfamily. In terms of assembly, the potassium channel is probably composed of a homo- or heterotetrameric complex of pore-forming alpha subunits that can associate only within their subfamily.

The protein localises to the cell membrane. It catalyses the reaction K(+)(in) = K(+)(out). In terms of biological role, pore-forming (alpha) subunit of voltage-gated inwardly rectifying potassium channel. Exhibits faster activation and deactivation kinetics and slow inactivation at membrane potentials positive to 240 mV, resulting in the weakest inward rectification. The sequence is that of Voltage-gated inwardly rectifying potassium channel KCNH7 from Mus musculus (Mouse).